The primary structure comprises 686 residues: MDQAASPDDHARYLALRAEVARHNRAYYEQDAPEISDDEYDALARALRDMEARHPEWVEDDSPVQTIGGAPSAAFEPVAHLTPMTSLDNVFDADELREWQEKLARSLNLPPESDDFTFTGEIKIDGLSVNLYYLDGTLQWAATRGNGRVGEMVTAQVLTIPGIPQHLDGLKGQLEVRGEVYLSRADFAAFNAQAEELGTPLLKNPRNGAAGALRQKDPEVTRTRNLKAIFYSLGRRDGVEARTQSEVLQWLAGRGFPVSHYSETFRGYVAAADYHRRMTEARSNFEFDADGTVIKLDPLALQEEAGFTSRAPRWAIAFKFPVEQVETVLESITVNVGRTGKLAPLAHLAPRLIEGSTVSKATLHNEDYIRQMDLRVGDTVVVRKSGGVIPQIMRVVTEKRPEKTTPFVFPTYCPECGHEVTRAEGDANTYCPNPACPAQRFERIRYFVSRGAMDVRGIGEKLVIQVIETGLVRDAADLYLLTAEQLAGLERGGEKKAQNVLAQLEASKTRPLWRLINALGMTHVGERNAQALARAFGSLDALLRATPEQIEAVPGMGKVTAVSVSAALADPTMRNLIERLRAAGMSPEETQTVRGEQLAGLNFVITGSLSQPRDELKALLEAAGARVTGSVTRKTSYLIAGQDAGSKLDRARELAVPVLDEAALGTLLHQRGVQLPGVQASAASTV.

NAD(+) contacts are provided by residues 37-41 (DDEYD), 86-87 (SL), and Glu121. The N6-AMP-lysine intermediate role is filled by Lys123. The NAD(+) site is built by Arg144, Glu179, Lys295, and Lys319. Residues Cys413, Cys416, Cys431, and Cys436 each coordinate Zn(2+). The BRCT domain maps to 593–681 (VRGEQLAGLN…GVQLPGVQAS (89 aa)).

Belongs to the NAD-dependent DNA ligase family. LigA subfamily. Mg(2+) serves as cofactor. The cofactor is Mn(2+).

The enzyme catalyses NAD(+) + (deoxyribonucleotide)n-3'-hydroxyl + 5'-phospho-(deoxyribonucleotide)m = (deoxyribonucleotide)n+m + AMP + beta-nicotinamide D-nucleotide.. In terms of biological role, DNA ligase that catalyzes the formation of phosphodiester linkages between 5'-phosphoryl and 3'-hydroxyl groups in double-stranded DNA using NAD as a coenzyme and as the energy source for the reaction. It is essential for DNA replication and repair of damaged DNA. This Deinococcus deserti (strain DSM 17065 / CIP 109153 / LMG 22923 / VCD115) protein is DNA ligase 2.